Consider the following 248-residue polypeptide: MNAIIIIPARLGSTRLPEKMLADIEGEPLIVRTWRQAMQCCRASRVVVATDSVKIAEVLTTYGAEVVMTSPEARCGSERIAEAARQFACDVVVNLQGDEPLISHETIDLALEPFFSPNPPDCSTLVFPLQPDDWAQLHDPNQVKVVLNREGYALYFSRSPIPFQRNQLTSTQCYRHVGLYAFKAEVLQCFAALPPTMLEEAESLEQLRLLEHGYRIRCMVTHDDQPGVNTAEDLELVRTLFKQRHQEA.

It belongs to the KdsB family.

The protein resides in the cytoplasm. The catalysed reaction is 3-deoxy-alpha-D-manno-oct-2-ulosonate + CTP = CMP-3-deoxy-beta-D-manno-octulosonate + diphosphate. It participates in nucleotide-sugar biosynthesis; CMP-3-deoxy-D-manno-octulosonate biosynthesis; CMP-3-deoxy-D-manno-octulosonate from 3-deoxy-D-manno-octulosonate and CTP: step 1/1. The protein operates within bacterial outer membrane biogenesis; lipopolysaccharide biosynthesis. Functionally, activates KDO (a required 8-carbon sugar) for incorporation into bacterial lipopolysaccharide in Gram-negative bacteria. This is 3-deoxy-manno-octulosonate cytidylyltransferase from Chlorobium chlorochromatii (strain CaD3).